Reading from the N-terminus, the 106-residue chain is Large ribosomal subunit protein eL30 (106 aa).

This sequence belongs to the eukaryotic ribosomal protein eL30 family.

The chain is Large ribosomal subunit protein eL30 from Methanococcus maripaludis (strain C5 / ATCC BAA-1333).